The sequence spans 244 residues: 5-oxoprolinase subunit A (244 aa).

This sequence belongs to the LamB/PxpA family. In terms of assembly, forms a complex composed of PxpA, PxpB and PxpC.

It catalyses the reaction 5-oxo-L-proline + ATP + 2 H2O = L-glutamate + ADP + phosphate + H(+). Its function is as follows. Catalyzes the cleavage of 5-oxoproline to form L-glutamate coupled to the hydrolysis of ATP to ADP and inorganic phosphate. In Escherichia coli (strain SMS-3-5 / SECEC), this protein is 5-oxoprolinase subunit A.